Consider the following 208-residue polypeptide: A-type ATP synthase subunit E (208 aa).

Residues 37–57 (DAEKTAEAEKNKILDNGKKQS) form a disordered region.

Belongs to the V-ATPase E subunit family. Has multiple subunits with at least A(3), B(3), C, D, E, F, H, I and proteolipid K(x).

It is found in the cell membrane. In terms of biological role, component of the A-type ATP synthase that produces ATP from ADP in the presence of a proton gradient across the membrane. The polypeptide is A-type ATP synthase subunit E (Methanobrevibacter smithii (strain ATCC 35061 / DSM 861 / OCM 144 / PS)).